A 208-amino-acid polypeptide reads, in one-letter code: uncharacterized protein (208 aa).

It to E.coli YfjJ.

This is an uncharacterized protein from Escherichia coli (strain K12).